We begin with the raw amino-acid sequence, 330 residues long: 3'-5' exonuclease (330 aa).

The segment at 1–92 (MDQYLIKMST…DGTPSPEKEI (92 aa)) is disordered. Basic and acidic residues-rich tracts occupy residues 27-39 (NTTR…KEKI) and 48-66 (KDTP…ENPP). Residues S79 and S87 each carry the phosphoserine modification. The 3'-5' exonuclease domain occupies 117-289 (SADEVMQWVE…IGQVIYRDIE (173 aa)). 3 residues coordinate Mg(2+): D139, E141, and D277.

The protein belongs to the WRNexo family.

It localises to the nucleus. Its function is as follows. Has exonuclease activity on both single-stranded and duplex templates bearing overhangs, but not blunt ended duplex DNA, and cleaves in a 3'-5' direction. Essential for the formation of DNA replication focal centers. Has an important role in maintaining genome stability. The sequence is that of 3'-5' exonuclease from Drosophila virilis (Fruit fly).